A 624-amino-acid chain; its full sequence is Actin-related protein 8 (624 aa).

An N-acetylmethionine modification is found at methionine 1. Residues 1–25 (MTQAEKGDTENGKEKGGEKEKEQRG) show a composition bias toward basic and acidic residues. Positions 1-29 (MTQAEKGDTENGKEKGGEKEKEQRGVKRP) are disordered. Serine 55 and threonine 56 together coordinate ATP. Serine 132 is subject to Phosphoserine. Residue 283 to 286 (DVGD) participates in ATP binding. Serine 412 is subject to Phosphoserine. The interval 430–462 (SKQEQSAKATADRKSASKPIGFEGDLRGQSSDL) is disordered.

It belongs to the actin family. ARP8 subfamily. Component of the chromatin remodeling INO80 complex; specifically part of a complex module associated with the DBINO domain of INO80. Interacts with ACTR5; the interaction is observed in asynchronous (interphase) cells but not in metaphase-arrested cells indicative for a possible dissociation of the INO80 complex in mitotic cells. Exists as monomers and dimers, but the dimer is most probably the biologically relevant form required for stable interactions with histones that exploits the twofold symmetry of the nucleosome core.

It is found in the nucleus. The protein resides in the chromosome. Plays an important role in the functional organization of mitotic chromosomes. Exhibits low basal ATPase activity, and unable to polymerize. Functionally, proposed core component of the chromatin remodeling INO80 complex which is involved in transcriptional regulation, DNA replication and probably DNA repair. Required for the recruitment of INO80 (and probably the INO80 complex) to sites of DNA damage. Strongly prefer nucleosomes and H3-H4 tetramers over H2A-H2B dimers, suggesting it may act as a nucleosome recognition module within the complex. In Homo sapiens (Human), this protein is Actin-related protein 8 (ACTR8).